The primary structure comprises 577 residues: CTP synthase (577 aa).

The tract at residues 1 to 268 (MDPAFIFITG…GALLCERLRL (268 aa)) is amidoligase domain. Position 14 (Ser14) interacts with CTP. Ser14 is a binding site for UTP. Position 15–20 (15–20 (SLGKGI)) interacts with ATP. Tyr55 is an L-glutamine binding site. Asp72 serves as a coordination point for ATP. Mg(2+)-binding residues include Asp72 and Glu142. CTP-binding positions include 149–151 (DIE), 189–194 (KTKPLQ), and Lys225. Residues 189–194 (KTKPLQ) and Lys225 contribute to the UTP site. One can recognise a Glutamine amidotransferase type-1 domain in the interval 333 to 575 (TVALVGKYVS…VAAGLERKDS (243 aa)). Gly396 serves as a coordination point for L-glutamine. Cys423 acts as the Nucleophile; for glutamine hydrolysis in catalysis. Residues 424–427 (LGMQ), Glu447, and Arg503 contribute to the L-glutamine site. Active-site residues include His548 and Glu550.

It belongs to the CTP synthase family. Homotetramer.

The catalysed reaction is UTP + L-glutamine + ATP + H2O = CTP + L-glutamate + ADP + phosphate + 2 H(+). It carries out the reaction L-glutamine + H2O = L-glutamate + NH4(+). It catalyses the reaction UTP + NH4(+) + ATP = CTP + ADP + phosphate + 2 H(+). Its pathway is pyrimidine metabolism; CTP biosynthesis via de novo pathway; CTP from UDP: step 2/2. Its activity is regulated as follows. Allosterically activated by GTP, when glutamine is the substrate; GTP has no effect on the reaction when ammonia is the substrate. The allosteric effector GTP functions by stabilizing the protein conformation that binds the tetrahedral intermediate(s) formed during glutamine hydrolysis. Inhibited by the product CTP, via allosteric rather than competitive inhibition. Functionally, catalyzes the ATP-dependent amination of UTP to CTP with either L-glutamine or ammonia as the source of nitrogen. Regulates intracellular CTP levels through interactions with the four ribonucleotide triphosphates. The polypeptide is CTP synthase (Treponema pallidum (strain Nichols)).